A 159-amino-acid polypeptide reads, in one-letter code: Protein UXT homolog (159 aa).

This sequence belongs to the UXT family.

The chain is Protein UXT homolog from Nematostella vectensis (Starlet sea anemone).